The sequence spans 638 residues: MSKTPLLDTIRTPDDLRKLRIDQVQQVADELRQETIDAVSVTGGHFGAGLGVVELTTAIHYVFDTPRDRLIWDVGHQAYPHKILTGRRDRIRTLRTAGGLSGFTKRTESDYDPFGAAHSSTSISAGLGMAVARDLAGGTNNVIAVIGDGSISAGMAYEAMNNAGAMNSRLIVILNDNNMSIAPPVGAMSAYLSRLYSGKTYRSLREAGKQIGKHLPKLIADRAARAEEYSRGFMMGGGTLFEELGFYYVGPIDGHNLDHLLPILQNVRDAETGPFLIHVVTQKGKGYAPAEAASDKYHAVVKFDIATGTQAKAKSNAPSYQNVFGQSLVKEAAKDDKVVGITAAMPSGTGIDIFEKAFPDRTFDVGIAEQHAVTFAAGLATEGFKPFCAIYSTFLQRGYDQIVHDVAIQSLPVRFAIDRAGLVGADGATHAGSFDNAYLGCLPNFVIMAASDEAELVHMVATQVAINDRPSAVRYPRGEGRGVEMPDVGVPLEIGKGRVIRQGNKVALLSFGTRLAECEKAAEELATLGLSTTVADARFMKPLDVDLVIKLANEHEILITIEEGSIGGFGSHVMQTLSDHGKLDGEVKMRAMVLPDVFLDHDTPAAMYAAAGLDAKAIVKKVFEALGKEHAAETVKLA.

Residues His76 and 117–119 contribute to the thiamine diphosphate site; that span reads AHS. Position 148 (Asp148) interacts with Mg(2+). Thiamine diphosphate is bound by residues 149–150, Asn177, Tyr287, and Glu369; that span reads GS. Asn177 is a Mg(2+) binding site.

Belongs to the transketolase family. DXPS subfamily. In terms of assembly, homodimer. Requires Mg(2+) as cofactor. Thiamine diphosphate serves as cofactor.

It catalyses the reaction D-glyceraldehyde 3-phosphate + pyruvate + H(+) = 1-deoxy-D-xylulose 5-phosphate + CO2. It functions in the pathway metabolic intermediate biosynthesis; 1-deoxy-D-xylulose 5-phosphate biosynthesis; 1-deoxy-D-xylulose 5-phosphate from D-glyceraldehyde 3-phosphate and pyruvate: step 1/1. In terms of biological role, catalyzes the acyloin condensation reaction between C atoms 2 and 3 of pyruvate and glyceraldehyde 3-phosphate to yield 1-deoxy-D-xylulose-5-phosphate (DXP). This is 1-deoxy-D-xylulose-5-phosphate synthase from Rhodopseudomonas palustris (strain HaA2).